The chain runs to 786 residues: Digalactosyldiacylglycerol synthase 1, chloroplastic (786 aa).

A chloroplast-targeting transit peptide spans 1–25 (MASQRQPPSSSNAFSFLSKGWREVR).

The protein belongs to the glycosyltransferase group 1 family. Glycosyltransferase 4 subfamily. In terms of tissue distribution, high expression in nodules infected cells, but low in nodule inner cortex and root central cylinder.

The protein localises to the plastid. It is found in the chloroplast outer membrane. It localises to the plastid outer membrane. The catalysed reaction is a 1,2-diacyl-3-O-(beta-D-galactosyl)-sn-glycerol + UDP-alpha-D-galactose = a 1,2-diacyl-3-O-[alpha-D-galactosyl-(1-&gt;6)-beta-D-galactosyl]-sn-glycerol + UDP + H(+). In terms of biological role, involved in the synthesis of diacylglycerol galactolipids that are specifically found in thylakoid and in nodule peribacteroid membranes. Specific for alpha-glycosidic linkages. This is Digalactosyldiacylglycerol synthase 1, chloroplastic from Lotus japonicus (Lotus corniculatus var. japonicus).